The following is a 264-amino-acid chain: Zinc import ATP-binding protein ZnuC (264 aa).

The 216-residue stretch at 11–226 (IELKGVNVTF…PVFIRFFGNQ (216 aa)) folds into the ABC transporter domain. 43–50 (GPNGGGKS) is an ATP binding site.

The protein belongs to the ABC transporter superfamily. Zinc importer (TC 3.A.1.15.5) family. As to quaternary structure, the complex is composed of two ATP-binding proteins (ZnuC), two transmembrane proteins (ZnuB) and a solute-binding protein (ZnuA).

The protein localises to the cell inner membrane. The enzyme catalyses Zn(2+)(out) + ATP(in) + H2O(in) = Zn(2+)(in) + ADP(in) + phosphate(in) + H(+)(in). Part of the ABC transporter complex ZnuABC involved in zinc import. Responsible for energy coupling to the transport system. The chain is Zinc import ATP-binding protein ZnuC from Histophilus somni (strain 129Pt) (Haemophilus somnus).